The sequence spans 429 residues: Ribosomal RNA small subunit methyltransferase B (429 aa).

S-adenosyl-L-methionine-binding positions include 254–260 (CAAPGGK), D277, D303, and D322. C375 acts as the Nucleophile in catalysis.

It belongs to the class I-like SAM-binding methyltransferase superfamily. RsmB/NOP family.

Its subcellular location is the cytoplasm. The enzyme catalyses cytidine(967) in 16S rRNA + S-adenosyl-L-methionine = 5-methylcytidine(967) in 16S rRNA + S-adenosyl-L-homocysteine + H(+). Its function is as follows. Specifically methylates the cytosine at position 967 (m5C967) of 16S rRNA. This chain is Ribosomal RNA small subunit methyltransferase B, found in Escherichia coli (strain SE11).